The sequence spans 695 residues: Eukaryotic translation initiation factor 3 subunit B (695 aa).

A compositionally biased stretch (basic and acidic residues) spans 1–10 (MAKKKGDEKA). The segment at 1–43 (MAKKKGDEKANPAPQSDNEEQNFEEEPDFDDPEDFVEIPEEEL) is disordered. Acidic residues predominate over residues 17–43 (DNEEQNFEEEPDFDDPEDFVEIPEEEL). Residues 60 to 144 (NVVVVDGCPQ…HTFLVNLFTD (85 aa)) form the RRM domain. 4 WD repeats span residues 164-205 (KVQS…PLLL), 295-335 (PPDE…LLDK), 338-373 (IKIP…TLLE), and 444-486 (EIKE…APTL).

It belongs to the eIF-3 subunit B family. As to quaternary structure, component of the eukaryotic translation initiation factor 3 (eIF-3) complex.

The protein localises to the cytoplasm. Functionally, RNA-binding component of the eukaryotic translation initiation factor 3 (eIF-3) complex, which is involved in protein synthesis of a specialized repertoire of mRNAs and, together with other initiation factors, stimulates binding of mRNA and methionyl-tRNAi to the 40S ribosome. The eIF-3 complex specifically targets and initiates translation of a subset of mRNAs involved in cell proliferation. The sequence is that of Eukaryotic translation initiation factor 3 subunit B from Bombyx mori (Silk moth).